A 448-amino-acid chain; its full sequence is Phosphoglucosamine mutase (448 aa).

Serine 104 acts as the Phosphoserine intermediate in catalysis. Residues serine 104, aspartate 243, aspartate 245, and aspartate 247 each contribute to the Mg(2+) site. Serine 104 is subject to Phosphoserine.

It belongs to the phosphohexose mutase family. The cofactor is Mg(2+). Activated by phosphorylation.

The enzyme catalyses alpha-D-glucosamine 1-phosphate = D-glucosamine 6-phosphate. Catalyzes the conversion of glucosamine-6-phosphate to glucosamine-1-phosphate. The sequence is that of Phosphoglucosamine mutase from Xylella fastidiosa (strain 9a5c).